A 103-amino-acid polypeptide reads, in one-letter code: AAFALPAFASFEKDVITPAALEAVLNRKAPLSNIMMENDAIVNVIANVKTVISNPVLEEALLKTNHGVNGIPCGESCVWIPCITSAIGCSCKSKVCYRNSLDN.

The first 9 residues, 1–9 (AAFALPAFA), serve as a signal peptide directing secretion. A propeptide spanning residues 10-69 (SFEKDVITPAALEAVLNRKAPLSNIMMENDAIVNVIANVKTVISNPVLEEALLKTNHGVN) is cleaved from the precursor. The segment at residues 70–99 (GIPCGESCVWIPCITSAIGCSCKSKVCYRN) is a cross-link (cyclopeptide (Gly-Asn)). 3 disulfide bridges follow: Cys-73-Cys-89, Cys-77-Cys-91, and Cys-82-Cys-96. A propeptide spanning residues 100–103 (SLDN) is cleaved from the precursor.

This is a cyclic peptide.

In terms of biological role, probably participates in a plant defense mechanism. This chain is Cyclotide vitri-A, found in Viola biflora (Yellow wood violet).